The chain runs to 678 residues: Probable E3 ubiquitin ligase complex SCF subunit sconB (678 aa).

Residues 1-52 (MSTEDNHDSQILTARHRSDASEQSFKSLFGGPSSEDGKETEPDTHDHNHSFS) form a disordered region. Residues 35-49 (EDGKETEPDTHDHNH) are compositionally biased toward basic and acidic residues. The F-box domain maps to 178 to 224 (IDFITALPPEIAFKILCYLDTTSLCKASQVSRGWRALADDDVVWHRM). The disordered stretch occupies residues 266–287 (VVGPRSPDASAESPPSGKRKLE). WD repeat units follow at residues 347-375 (GHTN…KIWD), 387-415 (GHES…KVWN), 427-455 (GHRG…KIWN), 466-496 (GHTD…RLWD), 508-543 (GHVG…TSGD), 553-595 (MGLE…RLWE), 607-635 (GHLE…KIWD), and 647-675 (GHSG…RMYS).

It belongs to the WD repeat MET30/SCONB/SCON-2 family. In terms of assembly, component of the SCF(sconB) E3 ubiquitin ligase complex.

It participates in protein modification; protein ubiquitination. In terms of biological role, component of the SCF(sconB) E3 ubiquitin ligase complex involved in the regulation of sulfur metabolite repression, probably by mediating the inactivation or degradation of the metR transcription factor. The protein is Probable E3 ubiquitin ligase complex SCF subunit sconB (sconB) of Emericella nidulans (strain FGSC A4 / ATCC 38163 / CBS 112.46 / NRRL 194 / M139) (Aspergillus nidulans).